A 252-amino-acid polypeptide reads, in one-letter code: Carbohydrate deacetylase (252 aa).

Residues His-59 and His-122 each coordinate Mg(2+).

Belongs to the YdjC deacetylase family. In terms of assembly, homodimer. Mg(2+) is required as a cofactor.

Its function is as follows. Probably catalyzes the deacetylation of acetylated carbohydrates an important step in the degradation of oligosaccharides. The sequence is that of Carbohydrate deacetylase from Vibrio vulnificus (strain CMCP6).